The primary structure comprises 179 residues: MILMPKKKVKKFRGSRTFGWGSHKNRRGRGNRGGAGNAGVHKHKYIKFVKLAKKGEYLFGKHGFTRPKILRKDYLNVQAVKETLRWLKEEGKLDDYTYRYLYSRPELNAGDLDEIIDRLASLGLAEKEGDVYRIDLAELGYSKLLGSGKVTRKMEVKVFEATPKAVEKIEAAGGKVVAE.

The protein belongs to the universal ribosomal protein uL15 family. In terms of assembly, part of the 50S ribosomal subunit.

Binds to the 23S rRNA. The protein is Large ribosomal subunit protein uL15 of Archaeoglobus fulgidus (strain ATCC 49558 / DSM 4304 / JCM 9628 / NBRC 100126 / VC-16).